Reading from the N-terminus, the 150-residue chain is Large ribosomal subunit protein uL13 (150 aa).

Belongs to the universal ribosomal protein uL13 family. In terms of assembly, part of the 50S ribosomal subunit.

This protein is one of the early assembly proteins of the 50S ribosomal subunit, although it is not seen to bind rRNA by itself. It is important during the early stages of 50S assembly. This Chlamydia abortus (strain DSM 27085 / S26/3) (Chlamydophila abortus) protein is Large ribosomal subunit protein uL13.